The chain runs to 272 residues: Glutamate racemase (272 aa).

Residues Asp-16–Ser-17 and Tyr-48–Gly-49 contribute to the substrate site. The Proton donor/acceptor role is filled by Cys-79. Substrate is bound at residue Asn-80–Thr-81. The Proton donor/acceptor role is filled by Cys-191. Residue Thr-192 to His-193 coordinates substrate.

It belongs to the aspartate/glutamate racemases family.

The catalysed reaction is L-glutamate = D-glutamate. The protein operates within cell wall biogenesis; peptidoglycan biosynthesis. In terms of biological role, provides the (R)-glutamate required for cell wall biosynthesis. The protein is Glutamate racemase of Chlorobium phaeobacteroides (strain DSM 266 / SMG 266 / 2430).